The primary structure comprises 283 residues: Fructose-1,6-bisphosphatase class 1 (283 aa).

Mg(2+) contacts are provided by Glu67, Asp86, Leu88, and Asp89. Substrate contacts are provided by residues 89 to 92 (DGSS), Tyr195, and Lys225. Glu231 provides a ligand contact to Mg(2+).

It belongs to the FBPase class 1 family. As to quaternary structure, homotetramer. Mg(2+) serves as cofactor.

It localises to the cytoplasm. It carries out the reaction beta-D-fructose 1,6-bisphosphate + H2O = beta-D-fructose 6-phosphate + phosphate. It functions in the pathway carbohydrate biosynthesis; gluconeogenesis. This is Fructose-1,6-bisphosphatase class 1 from Natronomonas pharaonis (strain ATCC 35678 / DSM 2160 / CIP 103997 / JCM 8858 / NBRC 14720 / NCIMB 2260 / Gabara) (Halobacterium pharaonis).